Reading from the N-terminus, the 1272-residue chain is MFNFRNLPLFDKDNSKDTDDIKNFINSYEGIYFSSSNKFINVFLDKILIIDPSSLNVITINTDLYVVDFLFNEKNKNLIVLGKGKNSLICSVYNIRECNFTLLKKIQLSKNINNIKKTLIAKCNEYIITLENKKITFYFLNKDYSINQSELIEDGKELIENIYLSKNHILLVIKNSYVYIYQLDIKNSHISYTLIDSFNLNLSYLRESINNKKKHINKINDVSNNDPKKDNNEKNTSSNNITHNNYNDISNNNNNNNNINGVKDHINNNTLENNDEPILSIYNEDLNVLYICQNMYNVLFVLNLNNLSFEFILLENKIINLFSCKFYLILLKEVNKKFFLHIYIIYEDMKLLVSTLLLNEPISNVIFFNNLFCLLIEEEISKPEIKVDKFYFYEQLKLKLHSKLDGDALKILKRDHVTNNINICKQEEKKYKLKNEQKDVEIYNKNNTVDSTNNTIYNSEVNHYKYITNDFFLNEDVNTDIKKELYNLNHTKDNINHDTLKKQTNQNDITMSLSKDEKNNDTNKFFNENMFTLNKFFKNCRNQIKIILKERNINEIINMFKKKKLYQWLIKYANLNKNYQIININFIHKIYADFLFEKEQYENAIYEYIQTINYLETSYVIHKYLNLDLYEYLTIYLEKLHVYHHFNDEHTMMLLSCYKKQCKKKKMISFIKKNKDKINLNKTYKFLLNAGYYNIVLNLSKKYKDHFTYVSILIEKYENYEKSLKYIFKLDVENICILLFKYGYKFIKYYPQLTIYLLKKIIKKYNINLTIFIPLFLDNIDFLFMFIVKFLDKNVNINKINHIQEKQKHHYSNMYHDSDELNSVTKQKNKINSFLLYEKDNNQNHNGIPSDSHNLSDDNNSQESTTAVNLINKTNLQLDIFNGEYDYILFVTVIQILLQKYKKSMQEENQTNNQSSKQTNNQSSKQTNKQSINQSNNQSINQTNNQSIKQTNIQTNKQKGNSTTNKIINKDETNEQNNILTFNIDKLIQNNKDKNINFLSVLLLSIYNYNKGLIYTSTQMNKYDISLLFSIHKFINNTKGKINKINMDEHKPNEQTMQINSSYKILNRNFQKVIYNICINHLKLNGSLSYNYIFYYLSMLNDEKYLIKFIKKIRQDMNLSIFNLIQILKKYNKSYSCIQNMVVAYMNDMNKNINDKCIEIEKDKKELEKIKKKQLKKKYNFYLIDNAYCSICKEILSVPMIHFLCKHSYHSYCLKDNNVCILCHNKDKEKKLLKEKAINSIQNFDEFFKYLQGSTDKFSYISNYLSYGITPK.

The disordered stretch occupies residues 216 to 260 (INKINDVSNNDPKKDNNEKNTSSNNITHNNYNDISNNNNNNNNIN). The span at 234-260 (KNTSSNNITHNNYNDISNNNNNNNNIN) shows a compositional bias: low complexity. Residues 608 to 752 (YIQTINYLET…GYKFIKYYPQ (145 aa)) form a CHCR repeat. The chain crosses the membrane as a helical span at residues 771-791 (IFIPLFLDNIDFLFMFIVKFL). 2 disordered regions span residues 842-862 (NQNHNGIPSDSHNLSDDNNSQ) and 908-970 (ENQT…IINK). Low complexity-rich tracts occupy residues 850–861 (SDSHNLSDDNNS) and 909–956 (NQTN…IQTN). A compositionally biased stretch (polar residues) spans 957 to 967 (KQKGNSTTNKI). Positions 1146–1182 (MNDMNKNINDKCIEIEKDKKELEKIKKKQLKKKYNFY) form a coiled coil. The RING-type; atypical zinc-finger motif lies at 1189 to 1224 (CSICKEILSVPMIHFLCKHSYHSYCLKDNNVCILCH).

It is found in the membrane. The polypeptide is RING finger protein PFE0100w (Plasmodium falciparum (isolate 3D7)).